The following is a 129-amino-acid chain: Small ribosomal subunit protein uS9 (129 aa).

Belongs to the universal ribosomal protein uS9 family.

The sequence is that of Small ribosomal subunit protein uS9 (rpsI) from Helicobacter pylori (strain J99 / ATCC 700824) (Campylobacter pylori J99).